Here is a 201-residue protein sequence, read N- to C-terminus: 3-isopropylmalate dehydratase small subunit (201 aa).

The protein belongs to the LeuD family. LeuD type 1 subfamily. Heterodimer of LeuC and LeuD.

The catalysed reaction is (2R,3S)-3-isopropylmalate = (2S)-2-isopropylmalate. Its pathway is amino-acid biosynthesis; L-leucine biosynthesis; L-leucine from 3-methyl-2-oxobutanoate: step 2/4. In terms of biological role, catalyzes the isomerization between 2-isopropylmalate and 3-isopropylmalate, via the formation of 2-isopropylmaleate. This is 3-isopropylmalate dehydratase small subunit from Cronobacter sakazakii (strain ATCC BAA-894) (Enterobacter sakazakii).